The primary structure comprises 101 residues: Acid shock protein (101 aa).

Residues Met1–Ala21 form the signal peptide. Residues Ala22 to Gln59 constitute a propeptide that is removed on maturation. The segment covering Ala26–Lys39 has biased composition (low complexity). The disordered stretch occupies residues Ala26–Ala101. 3 stretches are compositionally biased toward basic residues: residues Thr40–Ala50, Ala60–Ala69, and Ala79–Ala88.

It belongs to the Asr family. Post-translationally, proteolytic processing gives rise to the active protein.

The protein resides in the periplasm. Functionally, required for growth and/or survival at acidic conditions. The protein is Acid shock protein (asr) of Enterobacter cloacae.